A 196-amino-acid chain; its full sequence is Large ribosomal subunit protein uL18 (196 aa).

This sequence belongs to the universal ribosomal protein uL18 family. As to quaternary structure, part of the 50S ribosomal subunit. Contacts the 5S and 23S rRNAs.

In terms of biological role, this is one of the proteins that bind and probably mediate the attachment of the 5S RNA into the large ribosomal subunit, where it forms part of the central protuberance. The sequence is that of Large ribosomal subunit protein uL18 from Sulfurisphaera tokodaii (strain DSM 16993 / JCM 10545 / NBRC 100140 / 7) (Sulfolobus tokodaii).